Consider the following 487-residue polypeptide: Serine/threonine-protein kinase 4 (487 aa).

Methionine 1 is subject to N-acetylmethionine. Position 3 is a phosphothreonine (threonine 3). A Protein kinase domain is found at 30 to 281 (FDVLEKLGEG…ATQLLQHPFV (252 aa)). Residues 36–44 (LGEGSYGSV) and lysine 59 contribute to the ATP site. Aspartate 149 (proton acceptor) is an active-site residue. Threonine 183 carries the post-translational modification Phosphothreonine; by autocatalysis. Residue serine 265 is modified to Phosphoserine. A coiled-coil region spans residues 290–310 (LRDLINEAMDVKLKRQESQQR). Over residues 303–312 (KRQESQQREV) the composition is skewed to basic and acidic residues. Residues 303–332 (KRQESQQREVDQDDEENSEEDEMDSGTMVR) are disordered. Residues 313 to 326 (DQDDEENSEEDEMD) are compositionally biased toward acidic residues. Serine 320 carries the post-translational modification Phosphoserine. Phosphothreonine is present on residues threonine 340 and threonine 367. The residue at position 387 (threonine 387) is a Phosphothreonine; by PKB/AKT1. 2 positions are modified to phosphoserine: serine 410 and serine 414. Tyrosine 433 carries the phosphotyrosine modification. Positions 433-480 (YEFLKSWTVEDLQKRLLALDPMMEQEIEEIRQKYQSKRQPILDAIEAK) constitute an SARAH domain.

Belongs to the protein kinase superfamily. STE Ser/Thr protein kinase family. STE20 subfamily. In terms of assembly, homodimer; mediated via the coiled-coil region. Interacts with NORE1, which inhibits autoactivation. Interacts with and stabilizes SAV1. Interacts with RASSF1. Interacts with FOXO3. Interacts with RASSF2 (via SARAH domain). Interacts with AR, PKB/AKT1, TNNI3 and SIRT1. Interacts with DLG5 (via PDZ domain 3). Interacts with MARK3 and SCRIB in the presence of DLG5. Mg(2+) serves as cofactor. Autophosphorylated on serine and threonine residues. Phosphorylation at Thr-387 by PKB/AKT1, leads to inhibition of its: kinase activity, nuclear translocation and autophosphorylation at Thr-183. It also diminishes its cleavage by caspases and its ability to phosphorylate FOXO3. Post-translationally, proteolytically cleaved by caspase-3 during apoptosis at Asp-326 and Asp-349 resulting in a 37 kDa or a 39 kDa subunit respectively. The 39 kDa subunit is further cleaved into the 37 kDa form. Proteolytic cleavage results in kinase activation and nuclear translocation of the truncated form (MST1/N). It is less likely that cleavage at Asp-349 is a prerequisite for activation as this site is not conserved in the murine ortholog.

The protein localises to the cytoplasm. Its subcellular location is the nucleus. It catalyses the reaction L-seryl-[protein] + ATP = O-phospho-L-seryl-[protein] + ADP + H(+). It carries out the reaction L-threonyl-[protein] + ATP = O-phospho-L-threonyl-[protein] + ADP + H(+). With respect to regulation, inhibited by the C-terminal non-catalytic region. Activated by caspase-cleavage. Full activation also requires homodimerization and autophosphorylation of Thr-183. Activated by RASSF1 which acts by preventing its dephosphorylation. Stress-activated, pro-apoptotic kinase which, following caspase-cleavage, enters the nucleus and induces chromatin condensation followed by internucleosomal DNA fragmentation. Key component of the Hippo signaling pathway which plays a pivotal role in organ size control and tumor suppression by restricting proliferation and promoting apoptosis. The core of this pathway is composed of a kinase cascade wherein STK3/MST2 and STK4/MST1, in complex with its regulatory protein SAV1, phosphorylates and activates LATS1/2 in complex with its regulatory protein MOB1, which in turn phosphorylates and inactivates YAP1 oncoprotein and WWTR1/TAZ. Phosphorylation of YAP1 by LATS2 inhibits its translocation into the nucleus to regulate cellular genes important for cell proliferation, cell death, and cell migration. STK3/MST2 and STK4/MST1 are required to repress proliferation of mature hepatocytes, to prevent activation of facultative adult liver stem cells (oval cells), and to inhibit tumor formation. Phosphorylates 'Ser-14' of histone H2B (H2BS14ph) during apoptosis. Phosphorylates FOXO3 upon oxidative stress, which results in its nuclear translocation and cell death initiation. Phosphorylates MOBKL1A, MOBKL1B and RASSF2. Phosphorylates TNNI3 (cardiac Tn-I) and alters its binding affinity to TNNC1 (cardiac Tn-C) and TNNT2 (cardiac Tn-T). Phosphorylates FOXO1 on 'Ser-212' and regulates its activation and stimulates transcription of PMAIP1 in a FOXO1-dependent manner. Phosphorylates SIRT1 and inhibits SIRT1-mediated p53/TP53 deacetylation, thereby promoting p53/TP53 dependent transcription and apoptosis upon DNA damage. Acts as an inhibitor of PKB/AKT1. Phosphorylates AR on 'Ser-650' and suppresses its activity by intersecting with PKB/AKT1 signaling and antagonizing formation of AR-chromatin complexes. The chain is Serine/threonine-protein kinase 4 (STK4) from Aotus nancymaae (Ma's night monkey).